Here is a 104-residue protein sequence, read N- to C-terminus: Large ribosomal subunit protein uL24 (104 aa).

Belongs to the universal ribosomal protein uL24 family. Part of the 50S ribosomal subunit.

One of two assembly initiator proteins, it binds directly to the 5'-end of the 23S rRNA, where it nucleates assembly of the 50S subunit. Its function is as follows. One of the proteins that surrounds the polypeptide exit tunnel on the outside of the subunit. This Rhodopseudomonas palustris (strain BisA53) protein is Large ribosomal subunit protein uL24.